Consider the following 277-residue polypeptide: Caspase-3 (277 aa).

Met1 is modified (N-acetylmethionine). Propeptides lie at residues 1–9 (MENTENSVD) and 10–28 (SKSI…KSVD). Residues 1-10 (MENTENSVDS) show a composition bias toward polar residues. Positions 1 to 25 (MENTENSVDSKSIKNSEPKIIHGSK) are disordered. Position 11 is an N6-acetyllysine (Lys11). Residues 11–20 (KSIKNSEPKI) are compositionally biased toward basic and acidic residues. A Phosphoserine modification is found at Ser26. Active-site residues include His121 and Cys163. The residue at position 163 (Cys163) is an S-nitrosocysteine; in inhibited form.

This sequence belongs to the peptidase C14A family. Heterotetramer that consists of two anti-parallel arranged heterodimers, each one formed by a 17 kDa (p17) and a 12 kDa (p12) subunit. Interacts with BIRC6/bruce. In terms of processing, cleavage by granzyme B, caspase-6, caspase-8 and caspase-10 generates the two active subunits. Additional processing of the propeptides is likely due to the autocatalytic activity of the activated protease. Active heterodimers between the small subunit of caspase-7 protease and the large subunit of caspase-3 also occur and vice versa. Post-translationally, S-nitrosylated on its catalytic site cysteine in unstimulated cell lines and denitrosylated upon activation of the Fas apoptotic pathway, associated with an increase in intracellular caspase activity. Fas therefore activates caspase-3 not only by inducing the cleavage of the caspase zymogen to its active subunits, but also by stimulating the denitrosylation of its active site thiol. Ubiquitinated by BIRC6; this activity is inhibited by DIABLO/SMAC.

The protein resides in the cytoplasm. It catalyses the reaction Strict requirement for an Asp residue at positions P1 and P4. It has a preferred cleavage sequence of Asp-Xaa-Xaa-Asp-|- with a hydrophobic amino-acid residue at P2 and a hydrophilic amino-acid residue at P3, although Val or Ala are also accepted at this position.. With respect to regulation, inhibited by BIRC6; following inhibition of BIRC6-caspase binding by DIABLO/SMAC, BIRC6 is subjected to caspase cleavage, leading to an increase in active caspases. Involved in the activation cascade of caspases responsible for apoptosis execution. At the onset of apoptosis, it proteolytically cleaves poly(ADP-ribose) polymerase PARP1 at a '216-Asp-|-Gly-217' bond. Cleaves and activates sterol regulatory element binding proteins (SREBPs) between the basic helix-loop-helix leucine zipper domain and the membrane attachment domain. Cleaves and activates caspase-6, -7 and -9 (CASP6, CASP7 and CASP9, respectively). Cleaves and inactivates interleukin-18 (IL18). Triggers cell adhesion in sympathetic neurons through RET cleavage. Cleaves IL-1 beta between an Asp and an Ala, releasing the mature cytokine which is involved in a variety of inflammatory processes. Cleaves and inhibits serine/threonine-protein kinase AKT1 in response to oxidative stress. Acts as an inhibitor of type I interferon production during virus-induced apoptosis by mediating cleavage of antiviral proteins CGAS, IRF3 and MAVS, thereby preventing cytokine overproduction. Also involved in pyroptosis by mediating cleavage and activation of gasdermin-E (GSDME). Cleaves XRCC4 and phospholipid scramblase proteins XKR4, XKR8 and XKR9, leading to promote phosphatidylserine exposure on apoptotic cell surface. Cleaves BIRC6 following inhibition of BIRC6-caspase binding by DIABLO/SMAC. The polypeptide is Caspase-3 (CASP3) (Saimiri boliviensis boliviensis (Bolivian squirrel monkey)).